A 226-amino-acid chain; its full sequence is MNENLFASFIAPTMMGLPIVTLIIMFPSLLFPTPKRLINNRTISIQQWLIQLTSKQMMAIHNQKGQTWSLMLMSLIMFIGSTNILGLLPHSFTPTTQLSMNLGMAIPLWSATVFTGFRYKTKTSLAHFLPQGTPALLIPMLVIIETISLFIQPVALAVRLTANITAGHLLIHLIGGATLALLNINTMTAFITFTILILLTILEFAVALIQAYVFTLLVSLYLHDNT.

6 helical membrane-spanning segments follow: residues 6-26, 68-88, 97-117, 136-156, 164-184, and 189-209; these read FASF…IIMF, WSLM…LGLL, QLSM…FTGF, LLIP…PVAL, ITAG…LLNI, and AFIT…VALI.

The protein belongs to the ATPase A chain family. As to quaternary structure, component of the ATP synthase complex composed at least of ATP5F1A/subunit alpha, ATP5F1B/subunit beta, ATP5MC1/subunit c (homooctomer), MT-ATP6/subunit a, MT-ATP8/subunit 8, ATP5ME/subunit e, ATP5MF/subunit f, ATP5MG/subunit g, ATP5MK/subunit k, ATP5MJ/subunit j, ATP5F1C/subunit gamma, ATP5F1D/subunit delta, ATP5F1E/subunit epsilon, ATP5PF/subunit F6, ATP5PB/subunit b, ATP5PD/subunit d, ATP5PO/subunit OSCP. ATP synthase complex consists of a soluble F(1) head domain (subunits alpha(3) and beta(3)) - the catalytic core - and a membrane F(0) domain - the membrane proton channel (subunits c, a, 8, e, f, g, k and j). These two domains are linked by a central stalk (subunits gamma, delta, and epsilon) rotating inside the F1 region and a stationary peripheral stalk (subunits F6, b, d, and OSCP). Interacts with DNAJC30; interaction is direct.

The protein localises to the mitochondrion inner membrane. It carries out the reaction H(+)(in) = H(+)(out). In terms of biological role, subunit a, of the mitochondrial membrane ATP synthase complex (F(1)F(0) ATP synthase or Complex V) that produces ATP from ADP in the presence of a proton gradient across the membrane which is generated by electron transport complexes of the respiratory chain. ATP synthase complex consist of a soluble F(1) head domain - the catalytic core - and a membrane F(1) domain - the membrane proton channel. These two domains are linked by a central stalk rotating inside the F(1) region and a stationary peripheral stalk. During catalysis, ATP synthesis in the catalytic domain of F(1) is coupled via a rotary mechanism of the central stalk subunits to proton translocation. With the subunit c (ATP5MC1), forms the proton-conducting channel in the F(0) domain, that contains two crucial half-channels (inlet and outlet) that facilitate proton movement from the mitochondrial intermembrane space (IMS) into the matrix. Protons are taken up via the inlet half-channel and released through the outlet half-channel, following a Grotthuss mechanism. The chain is ATP synthase F(0) complex subunit a from Sus scrofa (Pig).